Consider the following 166-residue polypeptide: Transcriptional repressor NrdR (166 aa).

A zinc finger spans residues 3-34; the sequence is CPFCHFVETDVIDTRKLYEGEVIRRRRRCRAC. The region spanning 49–139 is the ATP-cone domain; the sequence is LMVVKKDGTR…VYRAFTDIGK (91 aa).

Belongs to the NrdR family. Zn(2+) is required as a cofactor.

Its function is as follows. Negatively regulates transcription of bacterial ribonucleotide reductase nrd genes and operons by binding to NrdR-boxes. In Chloroflexus aurantiacus (strain ATCC 29364 / DSM 637 / Y-400-fl), this protein is Transcriptional repressor NrdR.